The sequence spans 872 residues: Bifunctional uridylyltransferase/uridylyl-removing enzyme (872 aa).

Positions 1–332 are uridylyltransferase; it reads MALPNKVKKL…PKHHQPIIQE (332 aa). A uridylyl-removing region spans residues 333–691; that stretch reads LDRNFERIGN…VSNKAMHGGT (359 aa). The region spanning 450–572 is the HD domain; that stretch reads VDEHTHRLIN…VKTERQLDYL (123 aa). 2 consecutive ACT domains span residues 692 to 773 and 799 to 872; these read QVFV…FKKN and LIEI…AETE.

It belongs to the GlnD family. Mg(2+) is required as a cofactor.

The enzyme catalyses [protein-PII]-L-tyrosine + UTP = [protein-PII]-uridylyl-L-tyrosine + diphosphate. The catalysed reaction is [protein-PII]-uridylyl-L-tyrosine + H2O = [protein-PII]-L-tyrosine + UMP + H(+). Its activity is regulated as follows. Uridylyltransferase (UTase) activity is inhibited by glutamine, while glutamine activates uridylyl-removing (UR) activity. Functionally, modifies, by uridylylation and deuridylylation, the PII regulatory proteins (GlnB and homologs), in response to the nitrogen status of the cell that GlnD senses through the glutamine level. Under low glutamine levels, catalyzes the conversion of the PII proteins and UTP to PII-UMP and PPi, while under higher glutamine levels, GlnD hydrolyzes PII-UMP to PII and UMP (deuridylylation). Thus, controls uridylylation state and activity of the PII proteins, and plays an important role in the regulation of nitrogen assimilation and metabolism. The chain is Bifunctional uridylyltransferase/uridylyl-removing enzyme from Pseudoalteromonas translucida (strain TAC 125).